Here is a 176-residue protein sequence, read N- to C-terminus: Large ribosomal subunit protein uL10 (176 aa).

Belongs to the universal ribosomal protein uL10 family. Part of the ribosomal stalk of the 50S ribosomal subunit. The N-terminus interacts with L11 and the large rRNA to form the base of the stalk. The C-terminus forms an elongated spine to which L12 dimers bind in a sequential fashion forming a multimeric L10(L12)X complex.

Its function is as follows. Forms part of the ribosomal stalk, playing a central role in the interaction of the ribosome with GTP-bound translation factors. This Mycobacteroides abscessus (strain ATCC 19977 / DSM 44196 / CCUG 20993 / CIP 104536 / JCM 13569 / NCTC 13031 / TMC 1543 / L948) (Mycobacterium abscessus) protein is Large ribosomal subunit protein uL10.